The following is a 103-amino-acid chain: Protein reprimo A (103 aa).

Residues I50–L70 traverse the membrane as a helical segment.

Belongs to the reprimo family.

The protein resides in the cytoplasm. It localises to the membrane. Functionally, may be involved in the regulation of p53-dependent G2 arrest of the cell cycle. This Danio rerio (Zebrafish) protein is Protein reprimo A.